A 110-amino-acid polypeptide reads, in one-letter code: Chelonianin (110 aa).

Gln-1 is modified (pyrrolidone carboxylic acid). In terms of domain architecture, BPTI/Kunitz inhibitor spans 8–58; the sequence is CRLPPEQGPCKGRIPRYFYNPASRMCESFIYGGCKGNKNNFKTKAECVRAC. Cystine bridges form between Cys-8-Cys-58, Cys-17-Cys-41, Cys-33-Cys-54, Cys-67-Cys-92, Cys-76-Cys-97, Cys-80-Cys-93, and Cys-86-Cys-101. The WAP domain occupies 60-105; the sequence is PPERPGVCPKTSGPGICLHGCDSDSDCKEGQKCCFDGCGYICLTVA.

In terms of biological role, the first domain inhibits trypsin; the second one inhibitis subtilisin. The chain is Chelonianin from Caretta caretta (Loggerhead sea turtle).